The following is a 313-amino-acid chain: UDP-glucose 4-epimerase (313 aa).

NAD(+)-binding positions include 11–12 (FI), 31–36 (DDLSSG), 56–57 (DI), and 77–81 (LAAQI). Serine 121 and tyrosine 146 together coordinate substrate. NAD(+)-binding residues include tyrosine 146 and lysine 150. Tyrosine 146 serves as the catalytic Proton acceptor. Residues asparagine 175, 189-190 (VV), 204-206 (KIF), arginine 213, and 271-274 (RLGD) each bind substrate.

Belongs to the NAD(P)-dependent epimerase/dehydratase family. Homodimer. Requires NAD(+) as cofactor.

The enzyme catalyses UDP-alpha-D-glucose = UDP-alpha-D-galactose. Its pathway is carbohydrate metabolism; galactose metabolism. Its function is as follows. Involved in the metabolism of galactose. Catalyzes the conversion of UDP-galactose (UDP-Gal) to UDP-glucose (UDP-Glc) through a mechanism involving the transient reduction of NAD. In Mycolicibacterium smegmatis (strain ATCC 700084 / mc(2)155) (Mycobacterium smegmatis), this protein is UDP-glucose 4-epimerase.